Here is a 65-residue protein sequence, read N- to C-terminus: uncharacterized protein (65 aa).

This is an uncharacterized protein from Escherichia coli (Bacteriophage T4).